Consider the following 433-residue polypeptide: PC-esterase domain-containing protein 1B (433 aa).

Positions 386-433 (PPCHQRQAPVVHRGFPRHFARGPYSNPWRDRPRRPPKHSPAGLESRPQ) are disordered.

This sequence belongs to the PC-esterase family.

The sequence is that of PC-esterase domain-containing protein 1B (Pced1b) from Mus musculus (Mouse).